A 213-amino-acid polypeptide reads, in one-letter code: 3,4-dihydroxy-2-butanone 4-phosphate synthase (213 aa).

Residues 27–28, aspartate 32, 140–144, and glutamate 164 each bind D-ribulose 5-phosphate; these read RE and RTGHT. Glutamate 28 serves as a coordination point for Mg(2+). A Mg(2+)-binding site is contributed by histidine 143.

It belongs to the DHBP synthase family. As to quaternary structure, homodimer. Mg(2+) serves as cofactor. The cofactor is Mn(2+).

The catalysed reaction is D-ribulose 5-phosphate = (2S)-2-hydroxy-3-oxobutyl phosphate + formate + H(+). It functions in the pathway cofactor biosynthesis; riboflavin biosynthesis; 2-hydroxy-3-oxobutyl phosphate from D-ribulose 5-phosphate: step 1/1. Its function is as follows. Catalyzes the conversion of D-ribulose 5-phosphate to formate and 3,4-dihydroxy-2-butanone 4-phosphate. This is 3,4-dihydroxy-2-butanone 4-phosphate synthase from Agrobacterium fabrum (strain C58 / ATCC 33970) (Agrobacterium tumefaciens (strain C58)).